The chain runs to 421 residues: Histidine--tRNA ligase (421 aa).

It belongs to the class-II aminoacyl-tRNA synthetase family.

Its subcellular location is the cytoplasm. It catalyses the reaction tRNA(His) + L-histidine + ATP = L-histidyl-tRNA(His) + AMP + diphosphate + H(+). This is Histidine--tRNA ligase from Pyrobaculum calidifontis (strain DSM 21063 / JCM 11548 / VA1).